A 180-amino-acid chain; its full sequence is Ribulose bisphosphate carboxylase small subunit, chloroplastic 2 (180 aa).

Residues 1–56 (MASMISSSAVTTVSRASRGQSAAVAPFGGLKSMTGFPVKKVNTDITSITSNGGRVK) constitute a chloroplast transit peptide.

The protein belongs to the RuBisCO small chain family. As to quaternary structure, heterohexadecamer of 8 large and 8 small subunits.

It localises to the plastid. The protein localises to the chloroplast. In terms of biological role, ruBisCO catalyzes two reactions: the carboxylation of D-ribulose 1,5-bisphosphate, the primary event in carbon dioxide fixation, as well as the oxidative fragmentation of the pentose substrate. Both reactions occur simultaneously and in competition at the same active site. Although the small subunit is not catalytic it is essential for maximal activity. The polypeptide is Ribulose bisphosphate carboxylase small subunit, chloroplastic 2 (Pisum sativum (Garden pea)).